The following is a 318-amino-acid chain: Phospho-N-acetylmuramoyl-pentapeptide-transferase (318 aa).

10 helical membrane passes run 5 to 25 (LKPL…VLAF), 50 to 70 (PTMG…VLAP), 71 to 91 (PSPL…IGLV), 115 to 135 (VLLG…GSVI), 139 to 159 (VTGW…LLLV), 173 to 193 (GLAA…ALTL), 198 to 218 (LVTF…YNFH), 222 to 242 (VFMG…LAIM), 248 to 268 (VLPV…LQVV), and 298 to 318 (VLFF…LLTI).

The protein belongs to the glycosyltransferase 4 family. MraY subfamily. Requires Mg(2+) as cofactor.

The protein resides in the cell membrane. It carries out the reaction UDP-N-acetyl-alpha-D-muramoyl-L-alanyl-gamma-D-glutamyl-meso-2,6-diaminopimeloyl-D-alanyl-D-alanine + di-trans,octa-cis-undecaprenyl phosphate = di-trans,octa-cis-undecaprenyl diphospho-N-acetyl-alpha-D-muramoyl-L-alanyl-D-glutamyl-meso-2,6-diaminopimeloyl-D-alanyl-D-alanine + UMP. It participates in cell wall biogenesis; peptidoglycan biosynthesis. Functionally, catalyzes the initial step of the lipid cycle reactions in the biosynthesis of the cell wall peptidoglycan: transfers peptidoglycan precursor phospho-MurNAc-pentapeptide from UDP-MurNAc-pentapeptide onto the lipid carrier undecaprenyl phosphate, yielding undecaprenyl-pyrophosphoryl-MurNAc-pentapeptide, known as lipid I. This is Phospho-N-acetylmuramoyl-pentapeptide-transferase from Moorella thermoacetica (strain ATCC 39073 / JCM 9320).